A 169-amino-acid polypeptide reads, in one-letter code: Methanogen homoaconitase small subunit (169 aa).

The YLRT motif lies at 27 to 30; that stretch reads YLRT.

The protein belongs to the LeuD family. LeuD type 2 subfamily. Heterotetramer of 2 HacA and 2 HacB proteins.

It carries out the reaction (2R)-homocitrate = (2R,3S)-homoisocitrate. The catalysed reaction is (2R)-homocitrate = cis-homoaconitate + H2O. The enzyme catalyses (2R,3S)-homoisocitrate = cis-homoaconitate + H2O. It catalyses the reaction cis-(homo)2aconitate + H2O = (2R,3S)-iso(homo)2citrate. It carries out the reaction cis-(homo)3aconitate + H2O = (2R,3S)-iso(homo)3citrate. It functions in the pathway organic acid metabolism; 2-oxosuberate biosynthesis. Its function is as follows. Component of a hydro-lyase with broad substrate specificity for cis-unsaturated tricarboxylic acids. Catalyzes both the reversible dehydration of (R)-homocitrate ((R)-2-hydroxybutane-1,2,4-tricarboxylate) to produce cis-homoaconitate ((Z)-but-1-ene-1,2,4-tricarboxylate), and its hydration to homoisocitrate ((1R,2S)-1-hydroxybutane-1,2,4-tricarboxylate). Is also able to hydrate the analogous longer chain substrates cis-homo(2)-aconitate, cis-homo(3)-aconitate. These reactions are part of the biosynthesis pathway of coenzyme B. This is Methanogen homoaconitase small subunit (hacB) from Methanosarcina mazei (strain ATCC BAA-159 / DSM 3647 / Goe1 / Go1 / JCM 11833 / OCM 88) (Methanosarcina frisia).